The sequence spans 1006 residues: SAC3 family protein A (1006 aa).

Disordered stretches follow at residues 1–75, 106–162, 183–239, 266–326, 516–550, 595–638, and 650–690; these read MNHG…GPAT, TPYQ…PGSY, GYQS…TIAT, GTEK…AVST, TVTT…RWEP, GFKP…SDKD, and AGSA…GNLH. 2 stretches are compositionally biased toward polar residues: residues 26–75 and 106–115; these read GSQT…GPAT and TPYQTSSDPH. A compositionally biased stretch (low complexity) spans 116-140; that stretch reads NYSNTGYSNYYSGYQQQPSQSYPQP. Polar residues predominate over residues 144 to 162; sequence YQNTGAPQPLSSFQNPGSY. 2 stretches are compositionally biased toward polar residues: residues 269 to 282 and 313 to 326; these read KLST…SQSF and SHPP…AVST. Residues 516 to 539 are compositionally biased toward low complexity; sequence TVTTTNVTNSESSSAQLSSLQNKS. The segment covering 609-618 has biased composition (basic residues); the sequence is SFQRPVKRQR. Residues 653-680 show a composition bias toward basic and acidic residues; that stretch reads AEEKKRRDSRSKRFEKIQGHSRGNDLTK. Positions 804 to 978 constitute a PCI domain; that stretch reads DLPEYNQCLS…DMLLDTKATS (175 aa).

This sequence belongs to the SAC3 family. In terms of assembly, interacts with EER5, SAC3B and CML20.

It is found in the nucleus. Functionally, component of the TREX-2 complex (transcription and export complex 2), a muliprotein complex that functions in docking export-competent ribonucleoprotein particles (mRNPs) to the nuclear entrance of the nuclear pore complex (nuclear basket). TREX-2 participates in mRNA export and accurate chromatin positioning in the nucleus by tethering genes to the nuclear periphery. The protein is SAC3 family protein A of Arabidopsis thaliana (Mouse-ear cress).